A 192-amino-acid polypeptide reads, in one-letter code: Mediator of RNA polymerase II transcription subunit 29 (192 aa).

The segment at 32–51 is disordered; sequence MQQQSPQQMQPAPVPQQTQQ.

The protein belongs to the Mediator complex subunit 29 family. Component of the Mediator complex.

It localises to the nucleus. In terms of biological role, component of the Mediator complex, a coactivator involved in the regulated transcription of nearly all RNA polymerase II-dependent genes. Mediator functions as a bridge to convey information from gene-specific regulatory proteins to the basal RNA polymerase II transcription machinery. Mediator is recruited to promoters by direct interactions with regulatory proteins and serves as a scaffold for the assembly of a functional preinitiation complex with RNA polymerase II and the general transcription factors. The polypeptide is Mediator of RNA polymerase II transcription subunit 29 (ix) (Bombyx mori (Silk moth)).